Consider the following 504-residue polypeptide: Chromosomal replication initiator protein DnaA (504 aa).

Residues 1 to 109 (MTADPDPPFV…PTDEPEDAPD (109 aa)) are domain I, interacts with DnaA modulators. Residues 98-162 (ATPTDEPEDA…PDTSSDDSNA (65 aa)) are disordered. Residues 109-125 (DSFADSPAPASVPAGPA) are compositionally biased toward low complexity. The interval 110–163 (SFADSPAPASVPAGPADADEIDDDRDARVNAQESWPKYFSRPEPDTSSDDSNAV) is domain II. Positions 164–380 (NLNRRYTFDT…GALIRVTAFA (217 aa)) are domain III, AAA+ region. ATP contacts are provided by G208, G210, K211, and T212. The domain IV, binds dsDNA stretch occupies residues 381 to 504 (SLNKTRIDRS…TTRIRQRAKR (124 aa)).

Belongs to the DnaA family. In terms of assembly, oligomerizes as a right-handed, spiral filament on DNA at oriC.

The protein localises to the cytoplasm. Its function is as follows. Plays an essential role in the initiation and regulation of chromosomal replication. ATP-DnaA binds to the origin of replication (oriC) to initiate formation of the DNA replication initiation complex once per cell cycle. Binds the DnaA box (a 9 base pair repeat at the origin) and separates the double-stranded (ds)DNA. Forms a right-handed helical filament on oriC DNA; dsDNA binds to the exterior of the filament while single-stranded (ss)DNA is stabiized in the filament's interior. The ATP-DnaA-oriC complex binds and stabilizes one strand of the AT-rich DNA unwinding element (DUE), permitting loading of DNA polymerase. After initiation quickly degrades to an ADP-DnaA complex that is not apt for DNA replication. Binds acidic phospholipids. Functionally, the probable consensus sequence for the DnaA box of this bacterium is 5'-TT(G/C)TCCACA-3'. The polypeptide is Chromosomal replication initiator protein DnaA (Mycolicibacterium smegmatis (strain ATCC 700084 / mc(2)155) (Mycobacterium smegmatis)).